A 200-amino-acid polypeptide reads, in one-letter code: dITP/XTP pyrophosphatase (200 aa).

5 to 10 is a substrate binding site; that stretch reads TRNEGK. D67 functions as the Proton acceptor in the catalytic mechanism. D67 contacts Mg(2+). Residues S68, 151–154, K174, and 179–180 each bind substrate; these read FGYD and HR.

Belongs to the HAM1 NTPase family. As to quaternary structure, homodimer. Mg(2+) is required as a cofactor.

The catalysed reaction is XTP + H2O = XMP + diphosphate + H(+). It carries out the reaction dITP + H2O = dIMP + diphosphate + H(+). The enzyme catalyses ITP + H2O = IMP + diphosphate + H(+). In terms of biological role, pyrophosphatase that catalyzes the hydrolysis of nucleoside triphosphates to their monophosphate derivatives, with a high preference for the non-canonical purine nucleotides XTP (xanthosine triphosphate), dITP (deoxyinosine triphosphate) and ITP. Seems to function as a house-cleaning enzyme that removes non-canonical purine nucleotides from the nucleotide pool, thus preventing their incorporation into DNA/RNA and avoiding chromosomal lesions. The sequence is that of dITP/XTP pyrophosphatase from Streptococcus pneumoniae serotype 4 (strain ATCC BAA-334 / TIGR4).